Reading from the N-terminus, the 78-residue chain is LYR motif-containing protein 9 (78 aa).

Belongs to the complex I LYR family. LYRM9 subfamily.

This is LYR motif-containing protein 9 (lyrm9) from Danio rerio (Zebrafish).